Here is a 62-residue protein sequence, read N- to C-terminus: Photosystem II reaction center protein Z (62 aa).

Transmembrane regions (helical) follow at residues 8 to 28 (ALLL…VLYA) and 41 to 61 (LVGG…NYFV).

Belongs to the PsbZ family. As to quaternary structure, PSII is composed of 1 copy each of membrane proteins PsbA, PsbB, PsbC, PsbD, PsbE, PsbF, PsbH, PsbI, PsbJ, PsbK, PsbL, PsbM, PsbT, PsbX, PsbY, PsbZ, Psb30/Ycf12, peripheral proteins PsbO, CyanoQ (PsbQ), PsbU, PsbV and a large number of cofactors. It forms dimeric complexes.

Its subcellular location is the cellular thylakoid membrane. Its function is as follows. May control the interaction of photosystem II (PSII) cores with the light-harvesting antenna, regulates electron flow through the 2 photosystem reaction centers. PSII is a light-driven water plastoquinone oxidoreductase, using light energy to abstract electrons from H(2)O, generating a proton gradient subsequently used for ATP formation. The chain is Photosystem II reaction center protein Z from Synechococcus elongatus (strain ATCC 33912 / PCC 7942 / FACHB-805) (Anacystis nidulans R2).